A 320-amino-acid polypeptide reads, in one-letter code: 1-aminocyclopropane-1-carboxylate oxidase 3 (320 aa).

Positions 154-254 (PNFGTKVSNY…RMSIASFYNP (101 aa)) constitute a Fe2OG dioxygenase domain. The Fe cation site is built by histidine 178, aspartate 180, and histidine 235.

The protein belongs to the iron/ascorbate-dependent oxidoreductase family. Fe cation serves as cofactor. As to expression, flowers.

The enzyme catalyses 1-aminocyclopropane-1-carboxylate + L-ascorbate + O2 = ethene + L-dehydroascorbate + hydrogen cyanide + CO2 + 2 H2O. Its pathway is alkene biosynthesis; ethylene biosynthesis via S-adenosyl-L-methionine; ethylene from S-adenosyl-L-methionine: step 2/2. The polypeptide is 1-aminocyclopropane-1-carboxylate oxidase 3 (ACO3) (Cucumis melo (Muskmelon)).